The following is a 337-amino-acid chain: MYQLSHTGKYPKTALNLRVRQITYQGIGINAYEFVREDGGELEEFTAGAHVDLYFRDGRVRQYSLCNDPAERRRYLIAVLRDDNGRGGSIAIHERVHTQRLVAVGHPRNNFPLIEGAPHQVLLAGGIGITPLKAMVHRLERMGADYTLHYCAKSSAHAAFQEELAPMAAKGRVIMHFDGGNPAKGLDIAALLRRYEPGWQLYYCGPPGFMEACTRACTHWPAEAVHFEYFVGAPVLPDDGVPQDIGSDALALGFQIKIASTGTVLTVPNDKSIAQVLGEHGIEVPTSCQSGLCGTCKVRYLAGDVEHRDYLLSAEARTQFLTTCVSRSKGATLVLDL.

The FAD-binding FR-type domain occupies 9–114; sequence KYPKTALNLR…GHPRNNFPLI (106 aa). One can recognise a 2Fe-2S ferredoxin-type domain in the interval 254–337; the sequence is FQIKIASTGT…SKGATLVLDL (84 aa). Positions 288, 293, 296, and 324 each coordinate [2Fe-2S] cluster.

This sequence belongs to the PDR/VanB family. In terms of assembly, this two-component enzyme is composed of an oxygenase (MdpJ) and a reductase (MdpK). The cofactor is [2Fe-2S] cluster.

Functionally, reductase component of a two-component system involved in the degradation of tertiary alcohols such as tert-butyl alcohol (TBA) and tert-amyl alcohol (TAA). MdpK probably provides electrons via its [2Fe-2S] iron-sulfur cluster to the MdpJ oxygenase subunit. The sequence is that of Tert-butanol monooxygenase / tert-amyl alcohol desaturase reductase subunit from Aquincola tertiaricarbonis.